The sequence spans 279 residues: Energy-coupling factor transporter ATP-binding protein EcfA1 (279 aa).

The ABC transporter domain occupies 6-240 (VEFRNVSFRY…KDALREIGLD (235 aa)). 40–47 (GHNGSGKS) is an ATP binding site.

It belongs to the ABC transporter superfamily. Energy-coupling factor EcfA family. Forms a stable energy-coupling factor (ECF) transporter complex composed of 2 membrane-embedded substrate-binding proteins (S component), 2 ATP-binding proteins (A component) and 2 transmembrane proteins (T component).

The protein localises to the cell membrane. In terms of biological role, ATP-binding (A) component of a common energy-coupling factor (ECF) ABC-transporter complex. Unlike classic ABC transporters this ECF transporter provides the energy necessary to transport a number of different substrates. This chain is Energy-coupling factor transporter ATP-binding protein EcfA1, found in Oceanobacillus iheyensis (strain DSM 14371 / CIP 107618 / JCM 11309 / KCTC 3954 / HTE831).